The chain runs to 361 residues: Trehalose 6-phosphate phosphatase RA3 (361 aa).

This sequence belongs to the trehalose phosphatase family. A divalent metal cation is required as a cofactor. Expressed in axillary inflorescence meristems.

It carries out the reaction alpha,alpha-trehalose 6-phosphate + H2O = alpha,alpha-trehalose + phosphate. Its pathway is glycan biosynthesis; trehalose biosynthesis. Removes the phosphate from trehalose 6-phosphate to produce free trehalose. Is specific for trehalose 6-phosphate. Does not possess activity toward glucose, sucrose or fructose 6-phosphates. Regulates inflorescence branching. Required to establish the correct identity and determinacy of axillary meristems in both male and female inflorescences. May act through a sugar signal that moves into axillary meristems. Acts upstream of RA1. May have a transcriptional regulatory function. In Zea mays (Maize), this protein is Trehalose 6-phosphate phosphatase RA3.